The following is a 547-amino-acid chain: Chaperonin GroEL (547 aa).

Residues Thr-30–Pro-33, Lys-51, Asp-87–Thr-91, Gly-415, Asn-480–Ala-482, and Asp-496 each bind ATP.

It belongs to the chaperonin (HSP60) family. In terms of assembly, forms a cylinder of 14 subunits composed of two heptameric rings stacked back-to-back. Interacts with the co-chaperonin GroES.

It localises to the cytoplasm. It carries out the reaction ATP + H2O + a folded polypeptide = ADP + phosphate + an unfolded polypeptide.. Its function is as follows. Together with its co-chaperonin GroES, plays an essential role in assisting protein folding. The GroEL-GroES system forms a nano-cage that allows encapsulation of the non-native substrate proteins and provides a physical environment optimized to promote and accelerate protein folding. The chain is Chaperonin GroEL from Glaesserella parasuis serovar 5 (strain SH0165) (Haemophilus parasuis).